Here is a 148-residue protein sequence, read N- to C-terminus: Protein-export protein SecB (148 aa).

The protein belongs to the SecB family. In terms of assembly, homotetramer, a dimer of dimers. One homotetramer interacts with 1 SecA dimer.

It is found in the cytoplasm. In terms of biological role, one of the proteins required for the normal export of preproteins out of the cell cytoplasm. It is a molecular chaperone that binds to a subset of precursor proteins, maintaining them in a translocation-competent state. It also specifically binds to its receptor SecA. This chain is Protein-export protein SecB, found in Psychrobacter arcticus (strain DSM 17307 / VKM B-2377 / 273-4).